Here is a 602-residue protein sequence, read N- to C-terminus: Serine/threonine-protein phosphatase 2A 56 kDa regulatory subunit delta isoform (602 aa).

Positions 1–13 (MPYKLKKEKEPPK) are enriched in basic and acidic residues. The segment at 1–96 (MPYKLKKEKE…QSSSRFNLSK (96 aa)) is disordered. 5 repeat units span residues 37-38 (QP), 39-40 (QP), 41-42 (QP), 43-44 (QP), and 45-46 (QP). Positions 37–52 (QPQPQPQPQPQAQSQP) are 8 X 2 AA approximate tandem repeats of Q-P. Over residues 46 to 55 (PQAQSQPPSS) the composition is skewed to low complexity. Residues 47 to 48 (QA) form a 6; approximate repeat. Residues 49-50 (QS) form a 7; approximate repeat. Repeat unit 8 spans residues 51 to 52 (QP). At Thr63 the chain carries Phosphothreonine. Phosphoserine is present on residues Ser88, Ser89, and Ser90. The short motif at 523–530 (RAPPPLPP) is the SH3-binding; class I element. A Nuclear localization signal motif is present at residues 548-565 (KRTVETEAVQMLKDIKKE). Ser573 and Ser598 each carry phosphoserine.

It belongs to the phosphatase 2A regulatory subunit B56 family. As to quaternary structure, PP2A consists of a common heterodimeric core enzyme, composed of a 36 kDa catalytic subunit (subunit C) and a 65 kDa constant regulatory subunit (PR65 or subunit A), that associates with a variety of regulatory subunits. Proteins that associate with the core dimer include three families of regulatory subunits B (the R2/B/PR55/B55, R3/B''/PR72/PR130/PR59 and R5/B'/B56 families), the 48 kDa variable regulatory subunit, viral proteins, and cell signaling molecules. Interacts with the PP2A A subunit PPP2R1A. Interacts with SGO1. Interacts with ADCY8. In terms of tissue distribution, isoform Delta-2 is widely expressed. Isoform Delta-1 is highly expressed in brain.

Its subcellular location is the cytoplasm. It is found in the nucleus. Its function is as follows. The B regulatory subunit might modulate substrate selectivity and catalytic activity, and might also direct the localization of the catalytic enzyme to a particular subcellular compartment. The polypeptide is Serine/threonine-protein phosphatase 2A 56 kDa regulatory subunit delta isoform (PPP2R5D) (Homo sapiens (Human)).